The primary structure comprises 230 residues: 8-demethylnovobiocic acid C(8)-methyltransferase (230 aa).

This sequence belongs to the methyltransferase superfamily.

It carries out the reaction 8-desmethylnovobiocic acid + S-adenosyl-L-methionine = novobiocic acid + S-adenosyl-L-homocysteine + H(+). It functions in the pathway antibiotic biosynthesis; novobiocin biosynthesis. Its function is as follows. C-methyltransferase that methylates 8-demethylnovobiocic acid to produce novobiocic acid in the novobiocin biosynthesis pathway. Novobiocin is an aminocoumarin family antibiotic that targets bacterial DNA gyrases. The protein is 8-demethylnovobiocic acid C(8)-methyltransferase (novO) of Streptomyces niveus (Streptomyces spheroides).